Reading from the N-terminus, the 287-residue chain is Large ribosomal subunit protein uL2 (287 aa).

Positions 221–287 (RGSVMNPCDH…SKRSRGGRDS (67 aa)) are disordered. Positions 258 to 287 (KTRKKNKPSNKLVVRRRRRISKRSRGGRDS) are enriched in basic residues.

This sequence belongs to the universal ribosomal protein uL2 family. Part of the 50S ribosomal subunit. Forms a bridge to the 30S subunit in the 70S ribosome.

Its function is as follows. One of the primary rRNA binding proteins. Required for association of the 30S and 50S subunits to form the 70S ribosome, for tRNA binding and peptide bond formation. It has been suggested to have peptidyltransferase activity; this is somewhat controversial. Makes several contacts with the 16S rRNA in the 70S ribosome. This Prochlorococcus marinus subsp. pastoris (strain CCMP1986 / NIES-2087 / MED4) protein is Large ribosomal subunit protein uL2.